Here is a 1051-residue protein sequence, read N- to C-terminus: Leucine zipper protein 1 (1051 aa).

N-acetylalanine is present on Ala-2. The stretch at 11 to 354 (ASNRHLRFKL…KLQVKKQKEL (344 aa)) forms a coiled coil. 4 disordered regions span residues 247-293 (ISST…KDLN), 374-401 (RTKL…HKRE), 432-554 (AAKA…SQVT), and 569-601 (ASSQ…SKAP). A compositionally biased stretch (basic and acidic residues) spans 254–293 (KESRRKGSLDYLKQVENETRDKSENEKNRNQEDNKVKDLN). 8 positions are modified to phosphoserine: Ser-256, Ser-261, Ser-395, Ser-513, Ser-571, Ser-575, Ser-612, and Ser-660. Over residues 569–578 (ASSQRASSEG) the composition is skewed to polar residues. Residues 675–727 (VNTTITPEPEPKLQPNSREKVKSRGGTRTPLFENDKNAAVENDSAKSMRSSSN) are disordered. Thr-680 is subject to Phosphothreonine. Phosphoserine is present on Ser-691. The span at 707–720 (ENDKNAAVENDSAK) shows a compositional bias: basic and acidic residues. A Phosphoserine modification is found at Ser-746. Positions 789–799 (VTSKVTSSITI) are enriched in low complexity. Residues 789–837 (VTSKVTSSITIYPSDSSGPRAVPTEAPRERHTSTSNIQVGPPELTSVSN) are disordered. The required for interaction with FLNA stretch occupies residues 834–884 (SVSNHISSPLELSIHKHDITLQLTEAERVGDGSPKNRAETVVSRSSILIKP). Ser-906 is modified (phosphoserine). A compositionally biased stretch (basic and acidic residues) spans 929 to 938 (RDLKCSEDPP). The interval 929–1000 (RDLKCSEDPP…TQSSLTASEV (72 aa)) is disordered. Polar residues-rich tracts occupy residues 946–958 (EATN…SSTD) and 989–999 (RRTQSSLTASE). Residue Thr-957 is modified to Phosphothreonine. Ser-993 carries the post-translational modification Phosphoserine.

In terms of assembly, component of the CERF-1 ISWI chromatin remodeling complex (also called the CECR2-containing remodeling factor (CERF) complex) at least composed of CECR2 and SMARCA1. Component of the CERF-5 ISWI chromatin remodeling complex at least composed of CECR2 and SMARCA5/SNF2H. LUZP1 is detected as part of the CERF-1 and CERF-5 complexes in embryonic stem (ES) cells where it is involved in complex stabilization but is not detected in the complexes in the testis. Interacts (via C-terminus) with LIMA1/EPLIN; both proteins restrict ciliation and may work together to regulate this process. Interacts with myosin light chain MYL9; the interaction results in inhibition of phosphorylation of MYL9 by DAPK3. Interacts with DAPK3; the interaction is likely to occur throughout the cell cycle and reduces the LUZP1-mediated suppression of MYL9 phosphorylation. Interacts with the chromosomal passenger complex (CPC); CPC kinase activity is required for localization of LUZP1 to the centromere. In terms of tissue distribution, expressed in cerebral cortex, cerebellum, hippocampus and brain stem.

The protein localises to the cytoplasm. Its subcellular location is the cytoskeleton. It localises to the microtubule organizing center. It is found in the centrosome. The protein resides in the cilium basal body. The protein localises to the midbody. Its subcellular location is the chromosome. It localises to the centromere. It is found in the spindle. The protein resides in the stress fiber. The protein localises to the nucleus. Its subcellular location is the cell projection. It localises to the dendrite. It is found in the perikaryon. The protein resides in the cell junction. The protein localises to the tight junction. Its function is as follows. F-actin cross-linking protein. Stabilizes actin and acts as a negative regulator of primary cilium formation. Positively regulates the phosphorylation of both myosin II and protein phosphatase 1 regulatory subunit PPP1R12A/MYPT1 and promotes the assembly of myosin II stacks within actin stress fibers. Inhibits the phosphorylation of myosin light chain MYL9 by DAPK3 and suppresses the constriction velocity of the contractile ring during cytokinesis. Binds to microtubules and promotes epithelial cell apical constriction by up-regulating levels of diphosphorylated myosin light chain (MLC) through microtubule-dependent inhibition of MLC dephosphorylation by myosin phosphatase. Involved in regulation of cell migration, nuclear size and centriole number, probably through regulation of the actin cytoskeleton. Component of the CERF-1 and CERF-5 chromatin remodeling complexes in embryonic stem cells where it acts to stabilize the complexes. Plays a role in embryonic brain and cardiovascular development. In Rattus norvegicus (Rat), this protein is Leucine zipper protein 1 (Luzp1).